The following is a 154-amino-acid chain: Myoglobin (154 aa).

In terms of domain architecture, Globin spans 2–148; that stretch reads GLSDGEWHLV…FRNDIAAKIK (147 aa). Position 4 is a phosphoserine (Ser4). Position 65 (His65) interacts with nitrite. O2 is bound at residue His65. Residue Thr68 is modified to Phosphothreonine. Residue His94 coordinates heme b.

It belongs to the globin family. Monomeric.

The protein resides in the cytoplasm. The protein localises to the sarcoplasm. It carries out the reaction Fe(III)-heme b-[protein] + nitric oxide + H2O = Fe(II)-heme b-[protein] + nitrite + 2 H(+). The catalysed reaction is H2O2 + AH2 = A + 2 H2O. Monomeric heme protein which primary function is to store oxygen and facilitate its diffusion within muscle tissues. Reversibly binds oxygen through a pentacoordinated heme iron and enables its timely and efficient release as needed during periods of heightened demand. Depending on the oxidative conditions of tissues and cells, and in addition to its ability to bind oxygen, it also has a nitrite reductase activity whereby it regulates the production of bioactive nitric oxide. Under stress conditions, like hypoxia and anoxia, it also protects cells against reactive oxygen species thanks to its pseudoperoxidase activity. This is Myoglobin (MB) from Pusa sibirica (Baikal seal).